The sequence spans 189 residues: Peptidyl-tRNA hydrolase (189 aa).

Tyr-18 contributes to the tRNA binding site. His-23 acts as the Proton acceptor in catalysis. Residues Phe-67, Asn-69, and Asn-115 each contribute to the tRNA site.

It belongs to the PTH family. In terms of assembly, monomer.

It localises to the cytoplasm. The enzyme catalyses an N-acyl-L-alpha-aminoacyl-tRNA + H2O = an N-acyl-L-amino acid + a tRNA + H(+). Hydrolyzes ribosome-free peptidyl-tRNAs (with 1 or more amino acids incorporated), which drop off the ribosome during protein synthesis, or as a result of ribosome stalling. In terms of biological role, catalyzes the release of premature peptidyl moieties from peptidyl-tRNA molecules trapped in stalled 50S ribosomal subunits, and thus maintains levels of free tRNAs and 50S ribosomes. The protein is Peptidyl-tRNA hydrolase of Leptospira borgpetersenii serovar Hardjo-bovis (strain JB197).